Consider the following 138-residue polypeptide: ATP synthase epsilon chain (138 aa).

This sequence belongs to the ATPase epsilon chain family. As to quaternary structure, F-type ATPases have 2 components, CF(1) - the catalytic core - and CF(0) - the membrane proton channel. CF(1) has five subunits: alpha(3), beta(3), gamma(1), delta(1), epsilon(1). CF(0) has three main subunits: a, b and c.

The protein localises to the cell inner membrane. Its function is as follows. Produces ATP from ADP in the presence of a proton gradient across the membrane. The polypeptide is ATP synthase epsilon chain (Idiomarina loihiensis (strain ATCC BAA-735 / DSM 15497 / L2-TR)).